The chain runs to 527 residues: Low-affinity Na(+)/H(+) antiporter NhaS1 (527 aa).

A run of 11 helical transmembrane segments spans residues 18–38, 41–61, 94–114, 126–146, 169–189, 196–216, 240–260, 276–296, 311–331, 352–372, and 380–400; these read FLIV…VPIL, IPYT…DVKL, WFPI…GIAF, IAFL…IALF, VAVV…TFDL, FVTV…SLSL, ILAE…GMVL, IVSI…FLLI, LILI…FGLS, TVLW…LSVP, and AIID…GLTT.

The protein belongs to the monovalent cation:proton antiporter 1 (CPA1) transporter (TC 2.A.36) family.

It localises to the cell membrane. Its function is as follows. Na(+)/H(+) antiporter that extrudes sodium in exchange for external protons. Might be able to function at relatively high concentrations of Na(+) ions. Also has Li(+)/H(+) antiport activity under K(+)-rich conditions, but it might not have any physiological relevance. The protein is Low-affinity Na(+)/H(+) antiporter NhaS1 (nhaS1) of Synechocystis sp. (strain ATCC 27184 / PCC 6803 / Kazusa).